Consider the following 488-residue polypeptide: UDP-N-acetylmuramoyl-L-alanyl-D-glutamate--2,6-diaminopimelate ligase (488 aa).

UDP-N-acetyl-alpha-D-muramoyl-L-alanyl-D-glutamate-binding positions include Leu-24, Ser-26, and 41–43; that span reads HQV. ATP is bound at residue 113 to 119; sequence GTNGKTT. Residues Asn-154, 155 to 156, Ser-182, Gln-188, and Arg-190 contribute to the UDP-N-acetyl-alpha-D-muramoyl-L-alanyl-D-glutamate site; that span reads TT. N6-carboxylysine is present on Lys-222. Residues Arg-386, 410–413, Gly-461, and Glu-465 each bind meso-2,6-diaminopimelate; that span reads DNPR. Positions 410-413 match the Meso-diaminopimelate recognition motif motif; it reads DNPR.

It belongs to the MurCDEF family. MurE subfamily. It depends on Mg(2+) as a cofactor. In terms of processing, carboxylation is probably crucial for Mg(2+) binding and, consequently, for the gamma-phosphate positioning of ATP.

It localises to the cytoplasm. The enzyme catalyses UDP-N-acetyl-alpha-D-muramoyl-L-alanyl-D-glutamate + meso-2,6-diaminopimelate + ATP = UDP-N-acetyl-alpha-D-muramoyl-L-alanyl-gamma-D-glutamyl-meso-2,6-diaminopimelate + ADP + phosphate + H(+). It participates in cell wall biogenesis; peptidoglycan biosynthesis. Its function is as follows. Catalyzes the addition of meso-diaminopimelic acid to the nucleotide precursor UDP-N-acetylmuramoyl-L-alanyl-D-glutamate (UMAG) in the biosynthesis of bacterial cell-wall peptidoglycan. The chain is UDP-N-acetylmuramoyl-L-alanyl-D-glutamate--2,6-diaminopimelate ligase from Haemophilus influenzae (strain 86-028NP).